Reading from the N-terminus, the 255-residue chain is F-box/SPRY domain-containing protein 1 (255 aa).

Residues 3–51 (DPVAALCNYNVLEVIFSYLELDDLSHCSQVCKSWYHFLNDENSDVWRWH) form the F-box domain. The B30.2/SPRY domain maps to 61-253 (LKSDLLSSVP…VSMVYLGTPL (193 aa)).

This sequence belongs to the FBXO45/Fsn family. In terms of assembly, component of an E3 ubiquitin ligase complex composed of hiw and Fsn.

It localises to the synapse. It participates in protein modification; protein ubiquitination. Functionally, required in the presynaptic motoneuron to down-regulate the levels of wnd and restrain synaptic terminal growth at the neuromuscular junction (NMJ). The protein is F-box/SPRY domain-containing protein 1 of Drosophila sechellia (Fruit fly).